A 473-amino-acid polypeptide reads, in one-letter code: Glutamate--tRNA ligase 1 (473 aa).

The short motif at 23 to 33 is the 'HIGH' region element; the sequence is PSPTGLLHVGG. The short motif at 252–256 is the 'KMSKS' region element; sequence KLSKR. ATP is bound at residue lysine 255.

The protein belongs to the class-I aminoacyl-tRNA synthetase family. Glutamate--tRNA ligase type 1 subfamily. Monomer.

It is found in the cytoplasm. It carries out the reaction tRNA(Glu) + L-glutamate + ATP = L-glutamyl-tRNA(Glu) + AMP + diphosphate. Functionally, catalyzes the attachment of glutamate to tRNA(Glu) in a two-step reaction: glutamate is first activated by ATP to form Glu-AMP and then transferred to the acceptor end of tRNA(Glu). This chain is Glutamate--tRNA ligase 1, found in Granulibacter bethesdensis (strain ATCC BAA-1260 / CGDNIH1).